The sequence spans 759 residues: LPS-assembly protein LptD (759 aa).

Positions 1 to 45 (MKPLKLELNPRDFNHYQAAFLPYRMKIKQPLHVLCFSVCSLSAVA) are cleaved as a signal peptide.

Belongs to the LptD family. In terms of assembly, component of the lipopolysaccharide transport and assembly complex. Interacts with LptE and LptA.

The protein localises to the cell outer membrane. Its function is as follows. Together with LptE, is involved in the assembly of lipopolysaccharide (LPS) at the surface of the outer membrane. The protein is LPS-assembly protein LptD of Pseudoalteromonas atlantica (strain T6c / ATCC BAA-1087).